Consider the following 139-residue polypeptide: Large ribosomal subunit protein uL16 (139 aa).

A compositionally biased stretch (basic residues) spans 1–20 (MLIPRRVKHRKQHHPKRRGM). Residues 1-22 (MLIPRRVKHRKQHHPKRRGMAK) are disordered.

It belongs to the universal ribosomal protein uL16 family. As to quaternary structure, part of the 50S ribosomal subunit.

Functionally, binds 23S rRNA and is also seen to make contacts with the A and possibly P site tRNAs. The protein is Large ribosomal subunit protein uL16 of Streptomyces coelicolor (strain ATCC BAA-471 / A3(2) / M145).